Consider the following 90-residue polypeptide: UPF0297 protein lwe1516 (90 aa).

This sequence belongs to the UPF0297 family.

The protein is UPF0297 protein lwe1516 of Listeria welshimeri serovar 6b (strain ATCC 35897 / DSM 20650 / CCUG 15529 / CIP 8149 / NCTC 11857 / SLCC 5334 / V8).